We begin with the raw amino-acid sequence, 126 residues long: Ribonuclease VapC23 (126 aa).

A PINc domain is found at 2–118; it reads IFVDTNVFMY…GVTRIKTFDH (117 aa). Mg(2+) is bound by residues D5 and D98.

Belongs to the PINc/VapC protein family. Mg(2+) is required as a cofactor.

Functionally, toxic component of a type II toxin-antitoxin (TA) system. An RNase. The cognate antitoxin is VapB23. The protein is Ribonuclease VapC23 of Mycobacterium tuberculosis (strain CDC 1551 / Oshkosh).